Here is a 370-residue protein sequence, read N- to C-terminus: Gibberellin 3-beta-dioxygenase 2-1 (370 aa).

The 102-residue stretch at 205 to 306 (MTATMHLNWY…RISLGYFLGP (102 aa)) folds into the Fe2OG dioxygenase domain. Residues His-229, Asp-231, and His-287 each coordinate Fe cation. The active site involves Arg-297.

Belongs to the iron/ascorbate-dependent oxidoreductase family. GA3OX subfamily. L-ascorbate is required as a cofactor. Requires Fe cation as cofactor. As to expression, expressed in internodes, nodes and the ear of the elongating stem.

The catalysed reaction is gibberellin A20 + 2-oxoglutarate + O2 = gibberellin A1 + succinate + CO2. In terms of biological role, converts the inactive gibberellin precursors GA9 and GA20 in the bioactives gibberellins GA4 and GA1. Also accepts GA15, GA44, the 2,3-unsaturated GA5 and 2,3-dihydroGA9 as substrate. No activity with GA12, GA53, GA24, GA19 and GA25. Also possesses 2-beta-hydroxylase, 2,3-desaturase, 2,3-epoxidase and 13-hydroxylase activities. The protein is Gibberellin 3-beta-dioxygenase 2-1 (GA3ox2-1) of Triticum aestivum (Wheat).